The chain runs to 417 residues: Adrenocortical dysplasia protein homolog (417 aa).

The PWI signature appears at 11–13 (PWI). Serine 25 bears the Phosphoserine mark. Residues 156 to 245 (ESASSSAGLT…SSIDSSQKAQ (90 aa)) are interaction with POT1. Polar residues-rich tracts occupy residues 237-250 (SIDS…NPAS) and 259-292 (SGAS…TSPR). Residues 237–309 (SIDSSQKAQE…PCSSTPSSPL (73 aa)) are disordered. Residues 296 to 309 (PSSTPCSSTPSSPL) show a composition bias toward low complexity. A phosphoserine mark is found at serine 313 and serine 317. Residue lysine 348 forms a Glycyl lysine isopeptide (Lys-Gly) (interchain with G-Cter in SUMO2) linkage.

As to quaternary structure, component of the shelterin complex (telosome) composed of TERF1, TERF2, TINF2, TERF2IP ACD and POT1. Forms heterodimers with POT1. Identified in a complex with POT1 and single-stranded telomeric DNA. Interacts with STN1 and TINF2.

The protein resides in the nucleus. It is found in the chromosome. Its subcellular location is the telomere. In terms of biological role, component of the shelterin complex (telosome) that is involved in the regulation of telomere length and protection. Shelterin associates with arrays of double-stranded TTAGGG repeats added by telomerase and protects chromosome ends. Without its protective activity, telomeres are no longer hidden from the DNA damage surveillance and chromosome ends are inappropriately processed by DNA repair pathways. Promotes binding of POT1 to single-stranded telomeric DNA. Modulates the inhibitory effects of POT1 on telomere elongation. The ACD-POT1 heterodimer enhances telomere elongation by recruiting telomerase to telomeres and increasing its processivity. May play a role in organogenesis. The polypeptide is Adrenocortical dysplasia protein homolog (Rattus norvegicus (Rat)).